A 188-amino-acid polypeptide reads, in one-letter code: Mitochondrial import receptor subunit TOM20-1 (188 aa).

The Cytoplasmic segment spans residues 1 to 164 (MDKLNFFEEI…VVKNKKSSDE (164 aa)). The chain crosses the membrane as a helical span at residues 165–182 (KYIVMGWVILAIGVVACI). Topologically, residues 183–188 (SFRKLR) are mitochondrial intermembrane.

It belongs to the Tom20 family. Forms part of the preprotein translocase complex of the outer mitochondrial membrane (TOM complex) which consists of at least 6 different proteins (TOM5, TOM6, TOM7, TOM20, TOM22/TOM9 and TOM40). Component of a mitochondrial large protein complex that contains, at least, MIC60, DGS1, TOM40, TOM20 proteins, and petC/RISP. As to expression, barely detected in roots.

It localises to the mitochondrion outer membrane. Functionally, central component of the receptor complex responsible for the recognition and translocation of cytosolically synthesized mitochondrial preproteins. Together with TOM22 functions as the transit peptide receptor at the surface of the mitochondrion outer membrane and facilitates the movement of preproteins into the translocation pore. The sequence is that of Mitochondrial import receptor subunit TOM20-1 from Arabidopsis thaliana (Mouse-ear cress).